The primary structure comprises 306 residues: Fe-S cluster assembly protein dre2 (306 aa).

The N-terminal SAM-like domain stretch occupies residues 21 to 150 (NVTQKRSLLL…EKPQYQEAAV (130 aa)). The linker stretch occupies residues 151-196 (PLRFGANKRKNKISPEPVKIESVGFVDNYDDDELINEDDLLDEEDL). [2Fe-2S] cluster-binding residues include C206, C218, C221, and C223. The segment at 206–223 (CQPETAKKRRRACKDCTC) is fe-S binding site A. Residues C269, C272, C280, and C283 each coordinate [4Fe-4S] cluster. 2 short sequence motifs (cx2C motif) span residues 269–272 (CNSC) and 280–283 (CASC). The fe-S binding site B stretch occupies residues 269 to 283 (CNSCSLGDAFRCASC).

The protein belongs to the anamorsin family. Monomer. Interacts with tah18. Interacts with mia40. [2Fe-2S] cluster serves as cofactor. Requires [4Fe-4S] cluster as cofactor.

It is found in the cytoplasm. The protein localises to the mitochondrion intermembrane space. Its function is as follows. Component of the cytosolic iron-sulfur (Fe-S) protein assembly (CIA) machinery required for the maturation of extramitochondrial Fe-S proteins. Part of an electron transfer chain functioning in an early step of cytosolic Fe-S biogenesis, facilitating the de novo assembly of a [4Fe-4S] cluster on the scaffold complex cfd1-nbp35. Electrons are transferred to dre2 from NADPH via the FAD- and FMN-containing protein tah18. Tah18-dre2 are also required for the assembly of the diferric tyrosyl radical cofactor of ribonucleotide reductase (RNR), probably by providing electrons for reduction during radical cofactor maturation in the catalytic small subunit rnr2. This chain is Fe-S cluster assembly protein dre2, found in Talaromyces stipitatus (strain ATCC 10500 / CBS 375.48 / QM 6759 / NRRL 1006) (Penicillium stipitatum).